Consider the following 52-residue polypeptide: Large ribosomal subunit protein bL33 (52 aa).

The protein belongs to the bacterial ribosomal protein bL33 family.

The sequence is that of Large ribosomal subunit protein bL33 from Helicobacter pylori (strain HPAG1).